The primary structure comprises 675 residues: MHHVNKYFNQTMVIEALKMSFYKLNPKQLIKNPIMFVVEVGMLLTLILICFPDIFGTSYLSRGYLITIFIILLITILFANFSEAFAEGRGKAQADSLRQAQSNLTARLIEENGAYRIVNATELKAGQNIRVENGETIPADGVVINGLATVDESAITGESAPVIKESGGDFDGVIGGTLVTSDWLEIRVESEAGTSFLDKMIALVEGAERNKTPNEIALFTLLTTLTIIFLVVIVTLYPIASYLHLILPIAMLIALTVCLIPTTIGGLLSAIGIAGMDRVTQFNVLAKSGRAVEVCGDVDVMILDKTGTITYGNRIASEFLPVNQQMMEKLIVAAYMSSIYDDTPEGKSIVRLAKQMYINELPKDIDGTYKPFTAETRMSGIITNEISVFKGAPNSMINLVKQQQGNIPLNIESICMDVSSKGGTPLIVIENNVMLGVIYLKDVIKDGLVERFAELRKMGIETVMCTGDNALTAATIAKEAGVDRFVAECKPEDKIKVIKDEQAKGHIVAMTGDGTNDAPALAQANIGLAMNSGTISAKEAANLIDLDSNPTKLIEVVKIGKQLLMTRGALTTFSLANDVAKYFAILPALMMSTIPEMTSLNIMHLSSPKSAIISALIFNALIIVALIPIAMKGVKVKGYSIDRIFINNMLIYGLGGLIVPFLGIKLIDMIVQFFV.

The next 4 helical transmembrane spans lie at 34-54 (IMFV…FPDI), 65-85 (LITI…SEAF), 216-236 (IALF…IVTL), and 245-265 (LILP…TTIG). D304 acts as the 4-aspartylphosphate intermediate in catalysis. ATP is bound by residues D341, E345, 372-379 (FTAETRMS), and K390. Mg(2+) contacts are provided by D513 and D517. 3 helical membrane-spanning segments follow: residues 569–591 (ALTT…ALMM), 611–631 (AIIS…PIAM), and 644–664 (IFIN…FLGI).

It belongs to the cation transport ATPase (P-type) (TC 3.A.3) family. Type IA subfamily. In terms of assembly, the system is composed of three essential subunits: KdpA, KdpB and KdpC.

The protein localises to the cell membrane. The enzyme catalyses K(+)(out) + ATP + H2O = K(+)(in) + ADP + phosphate + H(+). Functionally, part of the high-affinity ATP-driven potassium transport (or Kdp) system, which catalyzes the hydrolysis of ATP coupled with the electrogenic transport of potassium into the cytoplasm. This subunit is responsible for energy coupling to the transport system and for the release of the potassium ions to the cytoplasm. The protein is Potassium-transporting ATPase ATP-binding subunit 2 of Staphylococcus aureus (strain MRSA252).